Consider the following 565-residue polypeptide: Thiol:disulfide interchange protein DsbD (565 aa).

The N-terminal stretch at 1 to 19 (MAQRIFTLILLLCSTSVFA) is a signal peptide. Topologically, residues 20-162 (GLFDAPGRSQ…VPQQEQPTAQ (143 aa)) are periplasmic. 2 disulfide bridges follow: Cys122/Cys128 and Cys182/Cys304. Residues 163–183 (LPFSALWALLIGIGIAFTPCV) form a helical membrane-spanning segment. Residues 184–207 (LPMYPLISGIVLGGKQRLSTARAL) are Cytoplasmic-facing. The helical transmembrane segment at 208 to 228 (LLTFIYVQGMALTYTALGLVV) threads the bilayer. At 229–242 (AAAGLQFQAALQHP) the chain is on the periplasmic side. The chain crosses the membrane as a helical span at residues 243 to 263 (YVLIGLTIVFTLLAMSMFGLL). The Cytoplasmic segment spans residues 264–295 (TLQLPSSLQTRLTLMSNRQQGGSPGGVFIMGT). The helical transmembrane segment at 296 to 316 (IAGLICSPCTTAPLSAILLYI) threads the bilayer. The Periplasmic segment spans residues 317-322 (AQSGNM). A helical membrane pass occupies residues 323-343 (WLGGGTLYLYALGMGLPLMLI). Residues 344-356 (TVFGNRLLPKSGP) are Cytoplasmic-facing. Residues 357–377 (WMEQVKTAFGFVILALPVFLL) form a helical membrane-spanning segment. At 378-383 (ERVIGD) the chain is on the periplasmic side. Residues 384 to 404 (VWGLRLWSALGVAFFGWAFIT) form a helical membrane-spanning segment. Residues 405-417 (SLQAKRGWMRVVQ) lie on the Cytoplasmic side of the membrane. The chain crosses the membrane as a helical span at residues 418–438 (IILLAAALVSVRPLQDWAFGA). A Thioredoxin domain is found at 434 to 565 (WAFGATHTAQ…FSAHLRDRQP (132 aa)). Over 439–565 (THTAQTQTHL…FSAHLRDRQP (127 aa)) the chain is Periplasmic. A disulfide bond links Cys480 and Cys483.

The protein belongs to the thioredoxin family. DsbD subfamily.

It localises to the cell inner membrane. The catalysed reaction is [protein]-dithiol + NAD(+) = [protein]-disulfide + NADH + H(+). It catalyses the reaction [protein]-dithiol + NADP(+) = [protein]-disulfide + NADPH + H(+). Functionally, required to facilitate the formation of correct disulfide bonds in some periplasmic proteins and for the assembly of the periplasmic c-type cytochromes. Acts by transferring electrons from cytoplasmic thioredoxin to the periplasm. This transfer involves a cascade of disulfide bond formation and reduction steps. This is Thiol:disulfide interchange protein DsbD from Escherichia coli O157:H7.